Here is a 431-residue protein sequence, read N- to C-terminus: Guanine nucleotide exchange factor rei-2 (431 aa).

The span at 1 to 21 shows a compositional bias: polar residues; sequence MDETATSSEVTETFVSDPTTR. The disordered stretch occupies residues 1–28; the sequence is MDETATSSEVTETFVSDPTTRQFEEDGH. Coiled-coil stretches lie at residues 149–171 and 214–247; these read EVLN…AESL and LEAQ…RISE. The disordered stretch occupies residues 249–298; that stretch reads IHEERSTGSLESAVSSDQEDQKSDFKSSESLPGNPPPYAPTAPPPYEDKY. Residues 255 to 264 show a composition bias toward polar residues; it reads TGSLESAVSS. The span at 281-293 shows a compositional bias: pro residues; it reads GNPPPYAPTAPPP.

This sequence belongs to the SH3BP5 family. Interacts with rab-11.1. Binds preferentially to the GDP-bound form of rab-11.1.

Guanine nucleotide exchange factor for Rab GTPase Rab-11.1. May spatially and temporally regulate the distribution of Rab-11.1 to target membranes during embryogenesis. May play a role in cytokinesis, probably by targeting rab-11.1 to the cleavage furrows. This chain is Guanine nucleotide exchange factor rei-2, found in Caenorhabditis elegans.